Consider the following 339-residue polypeptide: Ribosomal RNA small subunit methyltransferase C (339 aa).

This sequence belongs to the methyltransferase superfamily. RsmC family. As to quaternary structure, monomer.

It is found in the cytoplasm. The enzyme catalyses guanosine(1207) in 16S rRNA + S-adenosyl-L-methionine = N(2)-methylguanosine(1207) in 16S rRNA + S-adenosyl-L-homocysteine + H(+). Functionally, specifically methylates the guanine in position 1207 of 16S rRNA in the 30S particle. This chain is Ribosomal RNA small subunit methyltransferase C, found in Aliivibrio salmonicida (strain LFI1238) (Vibrio salmonicida (strain LFI1238)).